Consider the following 125-residue polypeptide: Small ribosomal subunit protein uS13 (125 aa).

The interval 95-125 is disordered; the sequence is GLPLRGQRTKTNARTRKGKRKTVANKKIASK.

The protein belongs to the universal ribosomal protein uS13 family. In terms of assembly, part of the 30S ribosomal subunit. Forms a loose heterodimer with protein S19. Forms two bridges to the 50S subunit in the 70S ribosome.

Located at the top of the head of the 30S subunit, it contacts several helices of the 16S rRNA. In the 70S ribosome it contacts the 23S rRNA (bridge B1a) and protein L5 of the 50S subunit (bridge B1b), connecting the 2 subunits; these bridges are implicated in subunit movement. Contacts the tRNAs in the A and P-sites. This is Small ribosomal subunit protein uS13 from Borrelia garinii subsp. bavariensis (strain ATCC BAA-2496 / DSM 23469 / PBi) (Borreliella bavariensis).